Consider the following 246-residue polypeptide: Probable fimbrial chaperone YadV (246 aa).

Residues 1–25 (MFFNTKHTTALCFVTCMAFSSSSIA) form the signal peptide.

The protein belongs to the periplasmic pilus chaperone family.

It localises to the periplasm. Part of the yadCKLM-htrE-yadVN fimbrial operon. Could contribute to adhesion to various surfaces in specific environmental niches. The polypeptide is Probable fimbrial chaperone YadV (yadV) (Escherichia coli (strain K12)).